We begin with the raw amino-acid sequence, 362 residues long: UPF0283 membrane protein Arad_2632 (362 aa).

Basic and acidic residues predominate over residues 1-11 (MTKPTEDDPKG). Residues 1 to 47 (MTKPTEDDPKGISRRPAAFSLEQEASREGAHTKTTAETPRRKPQSFD) form a disordered region. 2 consecutive transmembrane segments (helical) span residues 82-102 (FSFG…AFGL) and 118-138 (LGYT…AIVV).

This sequence belongs to the UPF0283 family.

The protein localises to the cell inner membrane. The sequence is that of UPF0283 membrane protein Arad_2632 from Rhizobium rhizogenes (strain K84 / ATCC BAA-868) (Agrobacterium radiobacter).